A 131-amino-acid polypeptide reads, in one-letter code: Peptide methionine sulfoxide reductase MsrB (131 aa).

A MsrB domain is found at 9–131 (DEDWKKELTP…NSASLKFQKE (123 aa)). Residues C48, C51, C97, and C100 each contribute to the Zn(2+) site. The active-site Nucleophile is the C120.

This sequence belongs to the MsrB Met sulfoxide reductase family. Zn(2+) serves as cofactor.

It catalyses the reaction L-methionyl-[protein] + [thioredoxin]-disulfide + H2O = L-methionyl-(R)-S-oxide-[protein] + [thioredoxin]-dithiol. The protein is Peptide methionine sulfoxide reductase MsrB of Leptospira interrogans serogroup Icterohaemorrhagiae serovar Lai (strain 56601).